The chain runs to 339 residues: Phosphate acyltransferase (339 aa).

The protein belongs to the PlsX family. Homodimer. Probably interacts with PlsY.

It localises to the cytoplasm. The catalysed reaction is a fatty acyl-[ACP] + phosphate = an acyl phosphate + holo-[ACP]. It functions in the pathway lipid metabolism; phospholipid metabolism. Its function is as follows. Catalyzes the reversible formation of acyl-phosphate (acyl-PO(4)) from acyl-[acyl-carrier-protein] (acyl-ACP). This enzyme utilizes acyl-ACP as fatty acyl donor, but not acyl-CoA. The sequence is that of Phosphate acyltransferase from Clostridium perfringens (strain ATCC 13124 / DSM 756 / JCM 1290 / NCIMB 6125 / NCTC 8237 / Type A).